We begin with the raw amino-acid sequence, 154 residues long: Myoglobin (154 aa).

One can recognise a Globin domain in the interval 2-148 (VLSDAEWQLV…FRKDIAAKYK (147 aa)). Position 4 is a phosphoserine (Ser-4). Position 65 (His-65) interacts with nitrite. Position 65 (His-65) interacts with O2. Phosphothreonine is present on Thr-68. His-94 lines the heme b pocket.

This sequence belongs to the globin family. In terms of assembly, monomeric.

It localises to the cytoplasm. It is found in the sarcoplasm. It carries out the reaction Fe(III)-heme b-[protein] + nitric oxide + H2O = Fe(II)-heme b-[protein] + nitrite + 2 H(+). The catalysed reaction is H2O2 + AH2 = A + 2 H2O. Its function is as follows. Monomeric heme protein which primary function is to store oxygen and facilitate its diffusion within muscle tissues. Reversibly binds oxygen through a pentacoordinated heme iron and enables its timely and efficient release as needed during periods of heightened demand. Depending on the oxidative conditions of tissues and cells, and in addition to its ability to bind oxygen, it also has a nitrite reductase activity whereby it regulates the production of bioactive nitric oxide. Under stress conditions, like hypoxia and anoxia, it also protects cells against reactive oxygen species thanks to its pseudoperoxidase activity. The polypeptide is Myoglobin (MB) (Eschrichtius robustus (California gray whale)).